We begin with the raw amino-acid sequence, 471 residues long: Adenosylhomocysteinase (471 aa).

Residues Thr60, Asp135, and Glu196 each contribute to the substrate site. 197-199 (TTT) is an NAD(+) binding site. 2 residues coordinate substrate: Lys226 and Asp230. Residues Asn231, 260-265 (GYGDVG), Glu283, Asn318, 339-341 (IGH), and Asn387 contribute to the NAD(+) site.

It belongs to the adenosylhomocysteinase family. NAD(+) serves as cofactor.

Its subcellular location is the cytoplasm. The enzyme catalyses S-adenosyl-L-homocysteine + H2O = L-homocysteine + adenosine. It functions in the pathway amino-acid biosynthesis; L-homocysteine biosynthesis; L-homocysteine from S-adenosyl-L-homocysteine: step 1/1. May play a key role in the regulation of the intracellular concentration of adenosylhomocysteine. The protein is Adenosylhomocysteinase of Chlorobium luteolum (strain DSM 273 / BCRC 81028 / 2530) (Pelodictyon luteolum).